Consider the following 226-residue polypeptide: Cytidylate kinase (226 aa).

12-20 (GPSGAGKGT) provides a ligand contact to ATP.

Belongs to the cytidylate kinase family. Type 1 subfamily.

The protein localises to the cytoplasm. It carries out the reaction CMP + ATP = CDP + ADP. It catalyses the reaction dCMP + ATP = dCDP + ADP. This Xanthomonas campestris pv. campestris (strain 8004) protein is Cytidylate kinase.